A 499-amino-acid polypeptide reads, in one-letter code: Putative DUF21 domain-containing protein At1g03270 (499 aa).

Residues 1-32 (MVVLSTLALVRAAYSLNSFVFEAEDIRFGSPW) are Extracellular-facing. One can recognise a CNNM transmembrane domain in the interval 29-211 (GSPWWFVVVG…GKGGELTHEE (183 aa)). Residues 33–53 (WFVVVGVACFLVLFAGIMSGL) traverse the membrane as a helical segment. Topologically, residues 54-91 (TLGLMSLGLVELEILQQSGSSAEKKQAAAILPVVKKQH) are cytoplasmic. A helical membrane pass occupies residues 92 to 112 (QLLVTLLLCNAAAMEALPICL). Residues 113-114 (DK) lie on the Extracellular side of the membrane. The helical transmembrane segment at 115–135 (IFHPFVAVLLSVTFVLAFGEI) threads the bilayer. The Cytoplasmic portion of the chain corresponds to 136–145 (IPQAICSRYG). The helical transmembrane segment at 146–166 (LAVGANFLWLVRILMIICYPI) threads the bilayer. Residues 167-499 (AYPIGKVLDA…TEPLLAESDR (333 aa)) lie on the Extracellular side of the membrane. N-linked (GlcNAc...) asparagine glycosylation is present at Asn-181. CBS domains follow at residues 230 to 291 (MTPI…EAPV), 295 to 359 (SIRK…SNLT), and 365 to 431 (HESH…IVDE). 3 N-linked (GlcNAc...) asparagine glycosylation sites follow: Asn-357, Asn-391, and Asn-484.

It localises to the membrane. The polypeptide is Putative DUF21 domain-containing protein At1g03270 (CBSDUF4) (Arabidopsis thaliana (Mouse-ear cress)).